A 130-amino-acid polypeptide reads, in one-letter code: kinetoplast-associated protein 2-2 (130 aa).

Residues 1–10 (MLRRTVSNFA) constitute a propeptide that is removed on maturation. Positions 95-130 (ETKQAQRAKAQKAQKKPKSAKSKVKKAAKKAKKSKK) are disordered. Residues 103-130 (KAQKAQKKPKSAKSKVKKAAKKAKKSKK) are compositionally biased toward basic residues.

It belongs to the KAP family. Associates with the kinetoplast DNA network.

The protein localises to the mitochondrion matrix. The protein resides in the kinetoplast. In terms of biological role, histone H1-like DNA-binding protein involved in the organization and segregation of kinetoplast DNA (kDNA). The mitochondrial DNA of kinetoplastid protozoa consists of about 5,000 minicircles and 20 to 30 maxicircles. These circular DNAs are held together by catenation into a highly organized compact disk structure referred to as a kinetoplast DNA (kDNA) network. Binds preferentially to a specific fragment of minicircle DNA and is able to compact kDNA networks through DNA charge neutralization and condensation. The sequence is that of kinetoplast-associated protein 2-2 (KAP2-2) from Crithidia fasciculata.